The primary structure comprises 275 residues: Trypsin-4 (275 aa).

An N-terminal signal peptide occupies residues 1 to 18 (MSNKITILLAVLLAVVAC). A propeptide spans 19–48 (AQAHASHQRRVPYPLPRFLPRPHHTVSNHR) (activation peptide). The Peptidase S1 domain occupies 49-274 (IVGGFEIDVA…VRDWIRETCG (226 aa)). Cysteines 74 and 90 form a disulfide. Catalysis depends on charge relay system residues His89 and Asp134. Intrachain disulfides connect Cys199–Cys215 and Cys226–Cys250. The active-site Charge relay system is the Ser230.

Belongs to the peptidase S1 family. As to expression, expressed in the midgut. Expression levels drop a few hours after blood feeding and pick up again 28 hours later.

The protein resides in the secreted. It catalyses the reaction Preferential cleavage: Arg-|-Xaa, Lys-|-Xaa.. Functionally, constitutive trypsin that is expressed 2 days after emergence, coinciding with host seeking behavior of the female. This chain is Trypsin-4 (TRYP4), found in Anopheles gambiae (African malaria mosquito).